The chain runs to 85 residues: Progonadoliberin-2 (85 aa).

The signal sequence occupies residues 1–23 (MCASRLVLLLGLLLCVGAHLSSG). Gln-24 carries the pyrrolidone carboxylic acid modification. Gly-33 is subject to Glycine amide.

The protein belongs to the GnRH family. Midbrain tegmentum.

It is found in the secreted. Functionally, stimulates the secretion of gonadotropins. The sequence is that of Progonadoliberin-2 (gnrh2) from Verasper moseri (Barfin flounder).